The following is a 540-amino-acid chain: Glucose-6-phosphate isomerase (540 aa).

Catalysis depends on glutamate 350, which acts as the Proton donor. Residues histidine 381 and lysine 503 contribute to the active site.

It belongs to the GPI family.

It localises to the cytoplasm. It carries out the reaction alpha-D-glucose 6-phosphate = beta-D-fructose 6-phosphate. It functions in the pathway carbohydrate biosynthesis; gluconeogenesis. Its pathway is carbohydrate degradation; glycolysis; D-glyceraldehyde 3-phosphate and glycerone phosphate from D-glucose: step 2/4. In terms of biological role, catalyzes the reversible isomerization of glucose-6-phosphate to fructose-6-phosphate. This Burkholderia pseudomallei (strain 668) protein is Glucose-6-phosphate isomerase.